We begin with the raw amino-acid sequence, 409 residues long: Peptidase T (409 aa).

H78 is a Zn(2+) binding site. The active site involves D80. Position 140 (D140) interacts with Zn(2+). The Proton acceptor role is filled by E173. Zn(2+) is bound by residues E174, D196, and H379.

This sequence belongs to the peptidase M20B family. It depends on Zn(2+) as a cofactor.

The protein resides in the cytoplasm. The catalysed reaction is Release of the N-terminal residue from a tripeptide.. Functionally, cleaves the N-terminal amino acid of tripeptides. This Serratia proteamaculans (strain 568) protein is Peptidase T.